The following is a 162-amino-acid chain: Transcription antitermination protein NusB (162 aa).

This sequence belongs to the NusB family.

Functionally, involved in transcription antitermination. Required for transcription of ribosomal RNA (rRNA) genes. Binds specifically to the boxA antiterminator sequence of the ribosomal RNA (rrn) operons. The polypeptide is Transcription antitermination protein NusB (Mycobacterium sp. (strain JLS)).